The following is a 202-amino-acid chain: NADH-quinone oxidoreductase subunit C (202 aa).

This sequence belongs to the complex I 30 kDa subunit family. NDH-1 is composed of 14 different subunits. Subunits NuoB, C, D, E, F, and G constitute the peripheral sector of the complex.

It localises to the cell inner membrane. It catalyses the reaction a quinone + NADH + 5 H(+)(in) = a quinol + NAD(+) + 4 H(+)(out). Functionally, NDH-1 shuttles electrons from NADH, via FMN and iron-sulfur (Fe-S) centers, to quinones in the respiratory chain. The immediate electron acceptor for the enzyme in this species is believed to be ubiquinone. Couples the redox reaction to proton translocation (for every two electrons transferred, four hydrogen ions are translocated across the cytoplasmic membrane), and thus conserves the redox energy in a proton gradient. This chain is NADH-quinone oxidoreductase subunit C, found in Paracidovorax citrulli (strain AAC00-1) (Acidovorax citrulli).